The primary structure comprises 370 residues: GMP synthase [glutamine-hydrolyzing] subunit B (370 aa).

One can recognise a GMPS ATP-PPase domain in the interval 3-189 (FDPQKFVDEI…LGLPRDIYNR (187 aa)). ATP is bound at residue 29–35 (SGGVDST).

In terms of assembly, heterodimer composed of a glutamine amidotransferase subunit (A) and a GMP-binding subunit (B).

It catalyses the reaction XMP + L-glutamine + ATP + H2O = GMP + L-glutamate + AMP + diphosphate + 2 H(+). It functions in the pathway purine metabolism; GMP biosynthesis; GMP from XMP (L-Gln route): step 1/1. In terms of biological role, catalyzes the synthesis of GMP from XMP. This chain is GMP synthase [glutamine-hydrolyzing] subunit B (guaAB), found in Sulfurisphaera tokodaii (strain DSM 16993 / JCM 10545 / NBRC 100140 / 7) (Sulfolobus tokodaii).